Consider the following 1483-residue polypeptide: Cystic fibrosis transmembrane conductance regulator (1483 aa).

Residues 1–77 (MQRSPLEKAS…KLINALRRCF (77 aa)) lie on the Cytoplasmic side of the membrane. Residues 78–98 (FWRFAFYGILLYLGEVTKAVQ) form a helical membrane-spanning segment. The ABC transmembrane type-1 1 domain occupies 81 to 365 (FAFYGILLYL…WAVQTWYDSL (285 aa)). The Extracellular portion of the chain corresponds to 99–122 (PLLLGRIIASYDPDNKQERSIAIY). The helical transmembrane segment at 123–146 (LAIGLCLLFIMRPLLLHPAIFGLH) threads the bilayer. Over 147 to 195 (HIGMQIRIAMFSLIYKKTLKLSSRVLDKISIGQLVSLLSNNLNKFDEGL) the chain is Cytoplasmic. A helical transmembrane segment spans residues 196–216 (ALAHFVWIAPLQVTLLMGLLW). Residues 217-222 (DLLQAS) lie on the Extracellular side of the membrane. The helical transmembrane segment at 223–243 (AFCGLAFLIVLALVQAGLGRM) threads the bilayer. Residues 244 to 298 (IMKYRDQRAGKINERLVITSEVIENIQSVKAYCWEEAMEKIIENIRQTELKLTRK) are Cytoplasmic-facing. A helical transmembrane segment spans residues 299 to 319 (AAHVRYFNSSAFFFSGFFVVS). Topologically, residues 320 to 339 (LSVLPYALIKTIILRKIFTT) are extracellular. Residues 340-358 (ISFCIVLRMAVTRQFPWAV) form a helical membrane-spanning segment. Over 359–859 (QTWYDSLGAI…YLRYITVHKN (501 aa)) the chain is Cytoplasmic. Residues Trp-401, Ser-434, 458 to 465 (GSTGAGKT), and Gln-493 contribute to the ATP site. An ABC transporter 1 domain is found at 423 to 646 (NGDNSLFFSN…RPDFSSKLMG (224 aa)). Cys-524 carries S-palmitoyl cysteine lipidation. Phosphoserine occurs at positions 549 and 660. Positions 654-832 (SPERRNSIIT…EEINEEDLKE (179 aa)) are disordered R region. Ser-670 is modified (phosphoserine; by PKA). At Ser-686 the chain carries Phosphoserine. A Glycyl lysine isopeptide (Lys-Gly) (interchain with G-Cter in ubiquitin) cross-link involves residue Lys-688. A phosphoserine mark is found at Ser-700 and Ser-712. Position 717 is a phosphothreonine (Thr-717). Ser-737, Ser-768, Ser-791, Ser-796, and Ser-814 each carry phosphoserine. The helical transmembrane segment at 860–880 (LIFVLIWCLVIFLAEVAVSLV) threads the bilayer. Residues 860–1156 (LIFVLIWCLV…AVNSSIEVDS (297 aa)) form the ABC transmembrane type-1 2 domain. The Extracellular portion of the chain corresponds to 881–919 (VLWILRNLSSQDKGNSTQSVNSSYAVIFTSTSAYYIFYI). 3 N-linked (GlcNAc...) asparagine glycosylation sites follow: Asn-887, Asn-895, and Asn-901. The discontinuously helical transmembrane segment at 920–940 (YVGVADTLLALGLFRGLPLVH) threads the bilayer. At 941–991 (TLITVSKILHHKMLHSVLQAPMSTLNTLKAGGILNRFSKDIAILDDLLPLT) the chain is on the cytoplasmic side. A helical transmembrane segment spans residues 992-1012 (IFDFIQLLLIVIGAVAVVSVL). Residues 1013-1014 (QP) are Extracellular-facing. Residues 1015–1035 (YIFLATVPVIAAFIILRAYFL) traverse the membrane as a helical segment. Over 1036–1096 (HTSQQLKQLE…TANWFLYLST (61 aa)) the chain is Cytoplasmic. The helical transmembrane segment at 1097–1117 (LRWFQMRMEIIFVIFFIAVTF) threads the bilayer. The Extracellular segment spans residues 1118–1131 (ISILTTGEGEGTVG). A helical membrane pass occupies residues 1132 to 1152 (IILTLAMNIMGTLQWAVNSSI). Over 1153–1483 (EVDSLMRSVS…TEDEVQDTRL (331 aa)) the chain is Cytoplasmic. An ABC transporter 2 domain is found at 1213–1446 (MTVKDLTAKY…RSAFRQAIGP (234 aa)). ATP contacts are provided by residues Tyr-1222 and 1247–1254 (GRTGSGKS). The tract at residues 1389–1483 (RTLKQAFADC…TEDEVQDTRL (95 aa)) is interaction with GORASP2. A lipid anchor (S-palmitoyl cysteine) is attached at Cys-1398. A disordered region spans residues 1444-1483 (IGPPERPGLLPHRLSSRQRSPSRIAALKEETEDEVQDTRL). Ser-1459 carries the phosphoserine modification. Positions 1473–1483 (ETEDEVQDTRL) are enriched in acidic residues. The PDZ-binding signature appears at 1481 to 1483 (TRL).

This sequence belongs to the ABC transporter superfamily. ABCC family. CFTR transporter (TC 3.A.1.202) subfamily. Monomer; does not require oligomerization for channel activity. May form oligomers in the membrane. Interacts with SLC26A3, SLC26A6 and NHERF1. Interacts with SHANK2. Interacts with MYO6. Interacts (via C-terminus) with GOPC (via PDZ domain); this promotes CFTR internalization and thereby decreases channel activity. Interacts with SLC4A7 through NHERF1. Found in a complex with MYO5B and RAB11A. Interacts with ANO1. Interacts with SLC26A8. Interacts with AHCYL1; the interaction increases CFTR activity. Interacts with CSE1L. The core-glycosylated form interacts with GORASP2 (via PDZ GRASP-type 1 domain) in respone to ER stress. Interacts with MARCHF2; the interaction leads to CFTR ubiqtuitination and degradation. Interacts with ADGRG2. In terms of processing, N-glycosylated. Post-translationally, phosphorylated; cAMP treatment promotes phosphorylation and activates the channel. Dephosphorylation decreases the ATPase activity (in vitro). Phosphorylation at PKA sites activates the channel. Phosphorylation at PKC sites enhances the response to phosphorylation by PKA. Phosphorylated by AMPK; this inhibits channel activity. Ubiquitinated, leading to its degradation in the lysosome. Deubiquitination by USP10 in early endosomes enhances its endocytic recycling to the cell membrane. Ubiquitinated by RNF185 during ER stress. Ubiquitinated by MARCHF2.

It localises to the apical cell membrane. It is found in the early endosome membrane. Its subcellular location is the cell membrane. The protein resides in the recycling endosome membrane. The protein localises to the endoplasmic reticulum membrane. It localises to the nucleus. The catalysed reaction is ATP + H2O + closed Cl(-) channel = ADP + phosphate + open Cl(-) channel.. The enzyme catalyses chloride(in) = chloride(out). It carries out the reaction hydrogencarbonate(in) = hydrogencarbonate(out). It catalyses the reaction ATP + H2O = ADP + phosphate + H(+). Its function is as follows. Epithelial ion channel that plays an important role in the regulation of epithelial ion and water transport and fluid homeostasis. Mediates the transport of chloride ions across the cell membrane. Possesses an intrinsic ATPase activity and utilizes ATP to gate its channel; the passive flow of anions through the channel is gated by cycles of ATP binding and hydrolysis by the ATP-binding domains. The ion channel is also permeable to HCO(3)(-); selectivity depends on the extracellular chloride concentration. Exerts its function also by modulating the activity of other ion channels and transporters. Contributes to the regulation of the pH and the ion content of the epithelial fluid layer. Modulates the activity of the epithelial sodium channel (ENaC) complex, in part by regulating the cell surface expression of the ENaC complex. May regulate bicarbonate secretion and salvage in epithelial cells by regulating the transporter SLC4A7. Can inhibit the chloride channel activity of ANO1. Plays a role in the chloride and bicarbonate homeostasis during sperm epididymal maturation and capacitation. The polypeptide is Cystic fibrosis transmembrane conductance regulator (Canis lupus familiaris (Dog)).